A 175-amino-acid chain; its full sequence is CDP-archaeol synthase (175 aa).

4 helical membrane passes run 41 to 61 (GFFV…QLLE), 82 to 102 (TILI…MSFF), 122 to 142 (FVLG…AEQF), and 147 to 167 (IAVI…VGYF).

This sequence belongs to the CDP-archaeol synthase family. Requires Mg(2+) as cofactor.

Its subcellular location is the cell membrane. The enzyme catalyses 2,3-bis-O-(geranylgeranyl)-sn-glycerol 1-phosphate + CTP + H(+) = CDP-2,3-bis-O-(geranylgeranyl)-sn-glycerol + diphosphate. Its pathway is membrane lipid metabolism; glycerophospholipid metabolism. Functionally, catalyzes the formation of CDP-2,3-bis-(O-geranylgeranyl)-sn-glycerol (CDP-archaeol) from 2,3-bis-(O-geranylgeranyl)-sn-glycerol 1-phosphate (DGGGP) and CTP. This reaction is the third ether-bond-formation step in the biosynthesis of archaeal membrane lipids. The chain is CDP-archaeol synthase from Methanococcoides burtonii (strain DSM 6242 / NBRC 107633 / OCM 468 / ACE-M).